Here is a 553-residue protein sequence, read N- to C-terminus: Transcription factor GAMYB (553 aa).

Basic and acidic residues predominate over residues 1–17 (MYRVKSESDCEMIHQEQ). The disordered stretch occupies residues 1–45 (MYRVKSESDCEMIHQEQMDSPVADDGSSGGSPHRGGGPPLKKGPW). Positions 27–38 (SSGGSPHRGGGP) are enriched in gly residues. 2 consecutive HTH myb-type domains span residues 37–89 (GPPL…ANHL) and 90–144 (RPNL…KRCQ). DNA-binding regions (H-T-H motif) lie at residues 65–89 (WNAV…ANHL) and 117–140 (WARM…NTRI). A disordered region spans residues 464 to 488 (PAQSTSMGSGEQVMGPKYEPGDTSP).

The protein resides in the nucleus. Transcriptional activator of gibberellin-dependent alpha-amylase expression in aleurone cells. Involved in pollen and floral organs development. May bind to the 5'-TAACAAA-3' box of alpha-amylase promoter. This Oryza sativa subsp. indica (Rice) protein is Transcription factor GAMYB (GAM1).